Here is a 254-residue protein sequence, read N- to C-terminus: UPF0246 protein CPE2152 (254 aa).

Belongs to the UPF0246 family.

The protein is UPF0246 protein CPE2152 of Clostridium perfringens (strain 13 / Type A).